The primary structure comprises 471 residues: 3-isopropylmalate dehydratase large subunit (471 aa).

3 residues coordinate [4Fe-4S] cluster: Cys347, Cys407, and Cys410.

The protein belongs to the aconitase/IPM isomerase family. LeuC type 1 subfamily. As to quaternary structure, heterodimer of LeuC and LeuD. The cofactor is [4Fe-4S] cluster.

It carries out the reaction (2R,3S)-3-isopropylmalate = (2S)-2-isopropylmalate. Its pathway is amino-acid biosynthesis; L-leucine biosynthesis; L-leucine from 3-methyl-2-oxobutanoate: step 2/4. Catalyzes the isomerization between 2-isopropylmalate and 3-isopropylmalate, via the formation of 2-isopropylmaleate. This is 3-isopropylmalate dehydratase large subunit from Anoxybacillus flavithermus (strain DSM 21510 / WK1).